The chain runs to 380 residues: MAPNLRKSHPLLKMVNNSLIDLPTPPNISAWWNFGSLLGICLVTQILTGLLLAMHYTADTSLAFSSVAHTCRNVQYGWLIRNLHANGASLFFICIYLHIGRGFYYGSYLYKETWNTGVILLLTLMATAFVGYVLPWGQMSFWGATVITNLFSAFPYIGQTLVEWAWGGFSVDNPTLTRFFALHFLLPFMIAGLTLIHLTFLHESGSNNPLGIVSNCDKIPFHPYFSLKDFLGFALMLFLLTALALFTPTLLGDPENFTPANPLVTPPHIKPEWYFLFAYAILRSIPNKLGGVLALAASVLVLLLVPFLHKSKQRTMTFRPLSQTLFWILVSNLFILTWIGSQPVEDPFITIGQLASITYFTIILILFPIISSLENKILNY.

Helical transmembrane passes span 34-54 (FGSL…LLAM), 78-99 (WLIR…YLHI), 114-134 (WNTG…GYVL), and 179-199 (FFAL…IHLT). His84 and His98 together coordinate heme b. Residues His183 and His197 each contribute to the heme b site. His202 is a binding site for a ubiquinone. Helical transmembrane passes span 227–247 (LKDF…ALFT), 289–309 (LGGV…PFLH), 321–341 (LSQT…WIGS), and 348–368 (FITI…ILFP).

It belongs to the cytochrome b family. The cytochrome bc1 complex contains 11 subunits: 3 respiratory subunits (MT-CYB, CYC1 and UQCRFS1), 2 core proteins (UQCRC1 and UQCRC2) and 6 low-molecular weight proteins (UQCRH/QCR6, UQCRB/QCR7, UQCRQ/QCR8, UQCR10/QCR9, UQCR11/QCR10 and a cleavage product of UQCRFS1). This cytochrome bc1 complex then forms a dimer. Requires heme b as cofactor.

It is found in the mitochondrion inner membrane. In terms of biological role, component of the ubiquinol-cytochrome c reductase complex (complex III or cytochrome b-c1 complex) that is part of the mitochondrial respiratory chain. The b-c1 complex mediates electron transfer from ubiquinol to cytochrome c. Contributes to the generation of a proton gradient across the mitochondrial membrane that is then used for ATP synthesis. The protein is Cytochrome b (MT-CYB) of Coracias caudatus (Lilac-breasted roller).